The primary structure comprises 641 residues: RING finger containing E3 ubiquitin-protein ligase WSV403 (641 aa).

Residues cysteine 329 to phenylalanine 371 form an RING-type; atypical zinc finger.

The enzyme catalyses S-ubiquitinyl-[E2 ubiquitin-conjugating enzyme]-L-cysteine + [acceptor protein]-L-lysine = [E2 ubiquitin-conjugating enzyme]-L-cysteine + N(6)-ubiquitinyl-[acceptor protein]-L-lysine.. It participates in protein modification; protein ubiquitination. Its function is as follows. Probable E3 ubiquitin-protein ligase which accepts ubiquitin from an E2 ubiquitin-conjugating enzyme in the form of a thioester and then directly transfers the ubiquitin to targeted substrates. This is RING finger containing E3 ubiquitin-protein ligase WSV403 from White spot syndrome virus (isolate Shrimp/China/Tongan/1996) (WSSV).